Consider the following 285-residue polypeptide: MTTTDRIAAAFARVSEAGRAAALIPYIAAGDPSPQATVPLMHALVRAGADLVELGVPFSDPMADGPVVQRAAERAIAQGVGLRRVLELVADFRRDDSVTPVVLMGYANPIERMGQRAFAQAAQAAGVDGVLVVDYPPEEVDEFAVMLAEAGVAPIFLLAPTSTEARIEAIGRVARGYVYYVSLKGVTGAGSLDTDDVARKLALIRRHVHIPVGVGFGIRDAASAQRIAAHADAVVIGSKLIETMEQAGAQAGADQKNEAAIAAAQQWLHTIRLALDDVKRENAPA.

Active-site proton acceptor residues include Glu-53 and Asp-64.

This sequence belongs to the TrpA family. In terms of assembly, tetramer of two alpha and two beta chains.

It catalyses the reaction (1S,2R)-1-C-(indol-3-yl)glycerol 3-phosphate + L-serine = D-glyceraldehyde 3-phosphate + L-tryptophan + H2O. It participates in amino-acid biosynthesis; L-tryptophan biosynthesis; L-tryptophan from chorismate: step 5/5. In terms of biological role, the alpha subunit is responsible for the aldol cleavage of indoleglycerol phosphate to indole and glyceraldehyde 3-phosphate. This is Tryptophan synthase alpha chain from Bordetella pertussis (strain Tohama I / ATCC BAA-589 / NCTC 13251).